Here is a 168-residue protein sequence, read N- to C-terminus: Probable acetolactate synthase small subunit (168 aa).

The region spanning 10–84 (IISALVEHKP…DVIKVRDLEP (75 aa)) is the ACT domain.

The protein belongs to the acetolactate synthase small subunit family. Dimer of large and small chains.

It carries out the reaction 2 pyruvate + H(+) = (2S)-2-acetolactate + CO2. It participates in amino-acid biosynthesis; L-isoleucine biosynthesis; L-isoleucine from 2-oxobutanoate: step 1/4. Its pathway is amino-acid biosynthesis; L-valine biosynthesis; L-valine from pyruvate: step 1/4. This is Probable acetolactate synthase small subunit (ilvH) from Methanothermobacter thermautotrophicus (strain ATCC 29096 / DSM 1053 / JCM 10044 / NBRC 100330 / Delta H) (Methanobacterium thermoautotrophicum).